A 562-amino-acid chain; its full sequence is Arginine--tRNA ligase (562 aa).

Residues 129–139 (ANPTGPLHVGH) carry the 'HIGH' region motif.

This sequence belongs to the class-I aminoacyl-tRNA synthetase family. In terms of assembly, monomer.

The protein resides in the cytoplasm. The enzyme catalyses tRNA(Arg) + L-arginine + ATP = L-arginyl-tRNA(Arg) + AMP + diphosphate. The polypeptide is Arginine--tRNA ligase (argS) (Xylella fastidiosa (strain 9a5c)).